Here is a 324-residue protein sequence, read N- to C-terminus: 4-diphosphocytidyl-2-C-methyl-D-erythritol kinase (324 aa).

Residue Lys11 is part of the active site. 108–118 (PIGAGLAGGST) is a binding site for ATP. Asp150 is an active-site residue.

Belongs to the GHMP kinase family. IspE subfamily.

The catalysed reaction is 4-CDP-2-C-methyl-D-erythritol + ATP = 4-CDP-2-C-methyl-D-erythritol 2-phosphate + ADP + H(+). Its pathway is isoprenoid biosynthesis; isopentenyl diphosphate biosynthesis via DXP pathway; isopentenyl diphosphate from 1-deoxy-D-xylulose 5-phosphate: step 3/6. Catalyzes the phosphorylation of the position 2 hydroxy group of 4-diphosphocytidyl-2C-methyl-D-erythritol. The protein is 4-diphosphocytidyl-2-C-methyl-D-erythritol kinase of Cyanothece sp. (strain PCC 7425 / ATCC 29141).